The sequence spans 347 residues: NADH-ubiquinone oxidoreductase chain 2 (347 aa).

The next 9 helical transmembrane spans lie at 3 to 23, 59 to 79, 89 to 109, 150 to 170, 178 to 198, 201 to 221, 237 to 257, 276 to 296, and 326 to 346; these read PMTFSLIMMTMVSGTFLVMMS, YFLTQATASMLLMMAAIINLL, LINPMASVTMTMALAMKLGLA, NLNILMIMALLSIAIGGWGGL, IMAYSSIAHMGWMMSVLMYNP, MLLNLYLYIPMTITTFSLLMI, LPLITMIILITMLSLGGLPPL, IILSTVMALLALLNLYFYTRI, and LPLMIIISTLILPVSPMTAIL.

It belongs to the complex I subunit 2 family. Core subunit of respiratory chain NADH dehydrogenase (Complex I) which is composed of 45 different subunits. Interacts with TMEM242.

It localises to the mitochondrion inner membrane. It catalyses the reaction a ubiquinone + NADH + 5 H(+)(in) = a ubiquinol + NAD(+) + 4 H(+)(out). Core subunit of the mitochondrial membrane respiratory chain NADH dehydrogenase (Complex I) which catalyzes electron transfer from NADH through the respiratory chain, using ubiquinone as an electron acceptor. Essential for the catalytic activity and assembly of complex I. The protein is NADH-ubiquinone oxidoreductase chain 2 of Nyctophilus arnhemensis (Northern long-eared bat).